Consider the following 326-residue polypeptide: High-affinity zinc uptake system protein ZnuA (326 aa).

A signal peptide spans 1–22; that stretch reads MIRPSSLVLAAALGTAALPARA. His59 contributes to the Zn(2+) binding site. Positions 117–155 are enriched in basic and acidic residues; that stretch reads GGEHEHEHEHEHEHEHEHEHDGHGHAEEQAHHDHDHSGT. Residues 117–161 are disordered; that stretch reads GGEHEHEHEHEHEHEHEHEHDGHGHAEEQAHHDHDHSGTDPHAWL. The Zn(2+) site is built by His158, His222, and Asp295. Cys267 and Cys322 form a disulfide bridge.

Belongs to the bacterial solute-binding protein 9 family. As to quaternary structure, monomer.

It is found in the periplasm. Functionally, part of the ATP-binding cassette (ABC) transport system ZnuABC involved in zinc import. Binds zinc with high affinity and specificity and delivers it to the membrane permease for translocation into the cytoplasm. The polypeptide is High-affinity zinc uptake system protein ZnuA (Paracoccus denitrificans (strain Pd 1222)).